Consider the following 735-residue polypeptide: Translation initiation factor IF-2, chloroplastic (735 aa).

The 173-residue stretch at 239-411 (RRAPIVTILG…ILLMADIENY (173 aa)) folds into the tr-type G domain. Positions 248–255 (GHVDHGKT) are G1. 248–255 (GHVDHGKT) is a GTP binding site. The interval 273–277 (GITQK) is G2. The G3 stretch occupies residues 298–301 (DTPG). GTP contacts are provided by residues 298 to 302 (DTPGH) and 352 to 355 (NKID). A G4 region spans residues 352-355 (NKID). The interval 388–390 (SAS) is G5.

This sequence belongs to the TRAFAC class translation factor GTPase superfamily. Classic translation factor GTPase family. IF-2 subfamily.

The protein localises to the plastid. It localises to the chloroplast. One of the essential components for the initiation of protein synthesis. Protects formylmethionyl-tRNA from spontaneous hydrolysis and promotes its binding to the 30S ribosomal subunits. Also involved in the hydrolysis of GTP during the formation of the 70S ribosomal complex. The sequence is that of Translation initiation factor IF-2, chloroplastic (infB) from Guillardia theta (Cryptophyte).